The sequence spans 39 residues: U2-ctenitoxin-Co1a (39 aa).

Disulfide bonds are present. In terms of tissue distribution, expressed by the venom gland.

The protein localises to the secreted. Functionally, omega-agatoxins are antagonists of voltage-gated calcium channels (Cav). This Ctenus ornatus (Brazilian spider) protein is U2-ctenitoxin-Co1a.